We begin with the raw amino-acid sequence, 307 residues long: Ribosomal RNA small subunit methyltransferase H (307 aa).

S-adenosyl-L-methionine-binding positions include 33-35 (GGY), D51, F82, D96, and Q103.

Belongs to the methyltransferase superfamily. RsmH family.

Its subcellular location is the cytoplasm. The enzyme catalyses cytidine(1402) in 16S rRNA + S-adenosyl-L-methionine = N(4)-methylcytidine(1402) in 16S rRNA + S-adenosyl-L-homocysteine + H(+). Specifically methylates the N4 position of cytidine in position 1402 (C1402) of 16S rRNA. The protein is Ribosomal RNA small subunit methyltransferase H of Rickettsia rickettsii (strain Iowa).